Consider the following 532-residue polypeptide: Egg peptide speract receptor (532 aa).

The signal sequence occupies residues 1–30 (MGLPMMLQQYCWAACLVICIAISSVDDVGA). The Extracellular segment spans residues 31 to 491 (EQNYGREAVE…VVCEGSTAPP (461 aa)). 4 consecutive SRCR domains span residues 43-144 (IRLI…VECL), 153-257 (LRMI…VVCK), 264-366 (IRLM…VVCA), and 382-485 (VRIV…VVCE). 12 disulfide bridges follow: Cys-68-Cys-133, Cys-81-Cys-143, Cys-112-Cys-122, Cys-178-Cys-244, Cys-191-Cys-256, Cys-223-Cys-233, Cys-289-Cys-355, Cys-302-Cys-365, Cys-335-Cys-345, Cys-406-Cys-475, Cys-419-Cys-484, and Cys-454-Cys-465. N-linked (GlcNAc...) asparagine glycosylation is found at Asn-78 and Asn-115. N-linked (GlcNAc...) asparagine glycosylation is present at Asn-459. Residues 492–520 (SGMSIAVIGGAAGGGVAGLAVAAFAFYYI) traverse the membrane as a helical segment. The Cytoplasmic segment spans residues 521–532 (KFVKPAGGGGQA).

Its subcellular location is the membrane. Functionally, receptor for the egg peptide speract. In Strongylocentrotus purpuratus (Purple sea urchin), this protein is Egg peptide speract receptor.